A 670-amino-acid polypeptide reads, in one-letter code: MNIPSLFVDPFSPLLEHPTEQRAKNVAHAPKRPCNLTQTEKMLAVRNALRYIPKEHHVLLATEFAEELNTYGHIYGYRFMPNFDLFAPPVSEIGAHCEQASAIILMILNNLDKRVAQFPQELVTYGGNGQVFSNWIQFRLVLRYLYTMTDHQTLVLYSGHPLGLFPSTPDSPRMTVTNGMMIPSYSTKELYDKYFALGVTQYGQMTAGSFCYIGPQGIVHGTTITVLNAGRRMGLDSLAGKVFVTAGLGGMSGAQPKAAKIAGCIGVIAEISDTALLKRHQQGWLDVYSKDLEEIVNWIKEYREKKEAISIGYLGNVVDLWERLAEEPECLVELGSDQTSLHNPFLGGFYPAGLTFEQSNQMMTSDPVKFKKLVQNSLIRQIAAIDKIAAKGMYFWDYGNAFLLECQRAGANLLREDAQDDKSFRYPSYMQDIMGDIFSMGFGPFRWVCTSGKPEDLRLTDQTACKIIDELKDTDVPEYVKQQYLDNKKWIEEAEKNKLVVGSQARILYSDRAGRVALASAFNELVKSGKVSAAIVISRDHHDVSGTDSPFRETSNVYDGSAFTADMAVQNCIGDSFRGATWVALHNGGGVGWGDVINGGFGIVLDGSSDAARRAEGMLNWDVPNGVTRRSWSGNAKAQEAIQRAEKQVDGLRVTLPVEADEELLKKLKF.

Residues 126–127 (GG), Gln204, 250–252 (GMS), Glu270, 316–317 (NV), 338–342 (QTSLH), 349–350 (FY), Tyr398, and Gly590 contribute to the NAD(+) site.

This sequence belongs to the urocanase family. NAD(+) serves as cofactor.

It carries out the reaction 4-imidazolone-5-propanoate = trans-urocanate + H2O. It functions in the pathway amino-acid degradation; L-histidine degradation into L-glutamate; N-formimidoyl-L-glutamate from L-histidine: step 2/3. The protein is Probable urocanate hydratase of Caenorhabditis elegans.